The following is a 403-amino-acid chain: Para-nitrophenol 4-monooxygenase (403 aa).

FAD-binding positions include 6 to 35 and 279 to 289; these read GVVV…VLEA and FRRGRVVLAGD.

The protein belongs to the PheA/TfdB FAD monooxygenase family. As to quaternary structure, monomer. It depends on FAD as a cofactor.

The catalysed reaction is 4-nitrophenol + NADPH + O2 + H(+) = 1,4-benzoquinone + nitrite + NADP(+) + H2O. It participates in xenobiotic degradation; 4-nitrophenol degradation. Its function is as follows. Involved in the degradation of para-nitrophenol (4-NP). Catalyzes oxidation of 4-nitrophenol (4-NP) at position 4 with concomitant removal of the nitro group as nitrite and production of para-benzoquinone. This chain is Para-nitrophenol 4-monooxygenase (pnpA), found in Pseudomonas sp. (strain WBC-3).